The sequence spans 344 residues: Arginine N-succinyltransferase (344 aa).

L125 lines the succinyl-CoA pocket. The Proton donor role is filled by H229.

The protein belongs to the arginine N-succinyltransferase family.

It carries out the reaction succinyl-CoA + L-arginine = N(2)-succinyl-L-arginine + CoA + H(+). The protein operates within amino-acid degradation; L-arginine degradation via AST pathway; L-glutamate and succinate from L-arginine: step 1/5. Its function is as follows. Catalyzes the transfer of succinyl-CoA to arginine to produce N(2)-succinylarginine. The sequence is that of Arginine N-succinyltransferase from Escherichia coli O6:H1 (strain CFT073 / ATCC 700928 / UPEC).